Here is a 220-residue protein sequence, read N- to C-terminus: Vesicle-associated membrane protein 7 (220 aa).

Topologically, residues 2–188 are cytoplasmic; that stretch reads AILFAVVARG…ARAMCMKNLK (187 aa). The Longin domain occupies 7–110; it reads VVARGTTILA…AMNSEFSSVL (104 aa). A v-SNARE coiled-coil homology domain is found at 125–185; that stretch reads QVAETQAQVD…RNLARAMCMK (61 aa). The helical; Anchor for type IV membrane protein transmembrane segment at 189-209 threads the bilayer; that stretch reads LTIIIIIVSIVIIYIIVSAAC. Residues 210-220 are Vesicular-facing; that stretch reads GGLAWPSCVQK.

Belongs to the synaptobrevin family.

Its subcellular location is the cytoplasmic vesicle. It localises to the secretory vesicle membrane. It is found in the golgi apparatus. The protein resides in the trans-Golgi network membrane. The protein localises to the late endosome membrane. Its subcellular location is the lysosome membrane. It localises to the endoplasmic reticulum membrane. It is found in the phagosome membrane. The protein resides in the synapse. The protein localises to the synaptosome. Involved in the targeting and/or fusion of transport vesicles to their target membrane during transport of proteins from the early endosome to the lysosome. Required for heterotypic fusion of late endosomes with lysosomes and homotypic lysosomal fusion. Required for calcium regulated lysosomal exocytosis. Involved in the export of chylomicrons from the endoplasmic reticulum to the cis Golgi. Required for focal exocytosis of late endocytic vesicles during phagosome formation. This Gallus gallus (Chicken) protein is Vesicle-associated membrane protein 7.